The primary structure comprises 937 residues: Calsyntenin-2 (937 aa).

A signal peptide spans 1-22; it reads MKMRAITAMLLLVLSGQCGILA. Over 23 to 818 the chain is Extracellular; it reads GKVNKHKPWI…NSDHISGTPP (796 aa). Cadherin domains follow at residues 32–148 and 149–249; these read IETS…SPVF and REPL…KPGW. Asn86 carries N-linked (GlcNAc...) asparagine glycosylation. N-linked (GlcNAc...) asparagine glycosylation is found at Asn330, Asn365, and Asn716. A helical membrane pass occupies residues 819-839; it reads AATVVIVMCIAALVVIVVLGI. Residues 840–937 lie on the Cytoplasmic side of the membrane; that stretch reads YRIHTTHQDS…LEWDPSTLPY (98 aa). Positions 846–937 are disordered; that stretch reads HQDSSKEDEE…LEWDPSTLPY (92 aa). Positions 865–874 are enriched in polar residues; sequence DNSNLNSIEG. Composition is skewed to acidic residues over residues 881–900 and 907–917; these read VREE…DDLA and ESEDSDEDEET.

Belongs to the calsyntenin family. In terms of assembly, homooligomer and heterooligomer; mediates both homophilic and heterophilc interactions with clstn1 and clstn3 paralogs via cadherin domains. In terms of tissue distribution, by 48 hours post-fertilization (hpf), widely expressed in the brain, with strong expression in the telencephalon and the midbrain.

It is found in the postsynaptic cell membrane. The protein localises to the endoplasmic reticulum membrane. The protein resides in the golgi apparatus membrane. It localises to the cell projection. Its subcellular location is the dendrite. Functionally, postsynaptic adhesion molecule. Promotes synapse development by acting as a cell adhesion molecule at the postsynaptic membrane, which associates with presynaptic neurexins. This chain is Calsyntenin-2 (clstn2a), found in Danio rerio (Zebrafish).